The sequence spans 349 residues: Prostaglandin reductase 1 (349 aa).

Residue Thr18 is modified to Phosphothreonine. The residue at position 20 (Ser20) is a Phosphoserine. NADP(+) contacts are provided by residues 152–155, Lys178, Tyr193, Asn217, 239–245, 270–272, and Asn321; these read GAVG, CGAISMY, and FIF. Lys178 carries the post-translational modification N6-(2-hydroxyisobutyryl)lysine; alternate. Position 178 is an N6-acetyllysine; alternate (Lys178).

Belongs to the NADP-dependent oxidoreductase L4BD family. Monomer or homodimer.

It is found in the cytoplasm. The enzyme catalyses 13,14-dihydro-15-oxo-prostaglandin E1 + NADP(+) = 15-oxoprostaglandin E1 + NADPH + H(+). It carries out the reaction 13,14-dihydro-15-oxo-prostaglandin E2 + NADP(+) = 15-oxoprostaglandin E2 + NADPH + H(+). It catalyses the reaction 13,14-dihydro-15-oxo-prostaglandin F1alpha + NADP(+) = 15-oxoprostaglandin F1alpha + NADPH + H(+). The catalysed reaction is 13,14-dihydro-15-oxo-PGF2alpha + NADP(+) = 15-oxoprostaglandin F2alpha + NADPH + H(+). The enzyme catalyses leukotriene B4 + NADP(+) = 12-oxo-leukotriene B4 + NADPH + H(+). It carries out the reaction 20-hydroxy-leukotriene B4 + NADP(+) = 12-oxo-20-hydroxy-leukotriene B4 + NADPH + H(+). It catalyses the reaction 6-trans-leukotriene B4 + NADP(+) = 12-oxo-(5S)-hydroxy-(6E,8E,10E,14Z)-eicosatetraenoate + NADPH + H(+). The catalysed reaction is (5S,12S)-dihydroxy-(6E,10E,12E,14Z)-eicosatetraenoate + NADP(+) = 12-oxo-(5S)-hydroxy-(6E,8E,10E,14Z)-eicosatetraenoate + NADPH + H(+). The enzyme catalyses an n-alkanal + NADP(+) = an alk-2-enal + NADPH + H(+). It carries out the reaction hexanal + NADP(+) = (E)-hex-2-enal + NADPH + H(+). It catalyses the reaction octanal + NADP(+) = (2E)-octenal + NADPH + H(+). The catalysed reaction is decanal + NADP(+) = (2E)-decenal + NADPH + H(+). The enzyme catalyses dodecanal + NADP(+) = (2E)-dodecenal + NADPH + H(+). It carries out the reaction 4-hydroxynonanal + NADP(+) = (E)-4-hydroxynon-2-enal + NADPH + H(+). It catalyses the reaction pentan-2-one + NADP(+) = (E)-pent-3-en-2-one + NADPH + H(+). The catalysed reaction is nonan-2-one + NADP(+) = (3E)-nonen-2-one + NADPH + H(+). NAD(P)H-dependent oxidoreductase involved in metabolic inactivation of pro- and anti-inflammatory eicosanoids: prostaglandins (PG), leukotrienes (LT) and lipoxins (LX). Catalyzes with high efficiency the reduction of the 13,14 double bond of 15-oxoPGs, including 15-oxo-PGE1, 15-oxo-PGE2, 15-oxo-PGF1-alpha and 15-oxo-PGF2-alpha. Catalyzes with lower efficiency the oxidation of the hydroxyl group at C12 of LTB4 and its derivatives, converting them into biologically less active 12-oxo-LTB4 metabolites. Reduces 15-oxo-LXA4 to 13,14 dihydro-15-oxo-LXA4, enhancing neutrophil recruitment at the inflammatory site. Plays a role in metabolic detoxification of alkenals and ketones. Reduces alpha,beta-unsaturated alkenals and ketones, particularly those with medium-chain length, showing highest affinity toward (2E)-decenal and (3E)-3-nonen-2-one. May inactivate 4-hydroxy-2-nonenal, a cytotoxic lipid constituent of oxidized low-density lipoprotein particles. This is Prostaglandin reductase 1 (PTGR1) from Oryctolagus cuniculus (Rabbit).